The chain runs to 238 residues: 15,16-dihydrobiliverdin:ferredoxin oxidoreductase (238 aa).

This sequence belongs to the HY2 family.

The enzyme catalyses 15,16-dihydrobiliverdin + oxidized 2[4Fe-4S]-[ferredoxin] = biliverdin IXalpha + reduced 2[4Fe-4S]-[ferredoxin] + 2 H(+). Catalyzes the two-electron reduction of biliverdin IX-alpha at the C15 methine bridge. The sequence is that of 15,16-dihydrobiliverdin:ferredoxin oxidoreductase from Prochlorococcus marinus (strain NATL2A).